Here is a 311-residue protein sequence, read N- to C-terminus: Aspartate carbamoyltransferase catalytic subunit (311 aa).

Carbamoyl phosphate is bound by residues arginine 55 and threonine 56. Lysine 85 contributes to the L-aspartate binding site. Carbamoyl phosphate contacts are provided by arginine 106, histidine 135, and glutamine 138. The L-aspartate site is built by arginine 168 and arginine 230. Carbamoyl phosphate contacts are provided by leucine 268 and proline 269.

This sequence belongs to the aspartate/ornithine carbamoyltransferase superfamily. ATCase family. As to quaternary structure, heterododecamer (2C3:3R2) of six catalytic PyrB chains organized as two trimers (C3), and six regulatory PyrI chains organized as three dimers (R2).

It carries out the reaction carbamoyl phosphate + L-aspartate = N-carbamoyl-L-aspartate + phosphate + H(+). The protein operates within pyrimidine metabolism; UMP biosynthesis via de novo pathway; (S)-dihydroorotate from bicarbonate: step 2/3. Catalyzes the condensation of carbamoyl phosphate and aspartate to form carbamoyl aspartate and inorganic phosphate, the committed step in the de novo pyrimidine nucleotide biosynthesis pathway. The polypeptide is Aspartate carbamoyltransferase catalytic subunit (Salmonella arizonae (strain ATCC BAA-731 / CDC346-86 / RSK2980)).